The sequence spans 478 residues: FERM domain-containing protein B (478 aa).

Disordered regions lie at residues 19 to 39 (ELIP…TITS), 129 to 196 (EENS…GFLT), and 202 to 221 (KAQS…TIAS). Composition is skewed to low complexity over residues 22 to 39 (PTQS…TITS) and 129 to 164 (EENS…ANDG). In terms of domain architecture, FERM spans 48–468 (VLIRIYFIDD…DWSEEWESKE (421 aa)). Positions 165–179 (SGSGSGSGSGSGSGS) are enriched in gly residues. Composition is skewed to low complexity over residues 180–189 (GTSTPNSPKG) and 204–216 (QSPQ…SSLS).

The protein is FERM domain-containing protein B (frmB) of Dictyostelium discoideum (Social amoeba).